The sequence spans 364 residues: V-type proton ATPase subunit d (364 aa).

This sequence belongs to the V-ATPase V0D/AC39 subunit family. As to quaternary structure, V-ATPase is a heteromultimeric enzyme composed of a peripheral catalytic V1 complex (components A to H) attached to an integral membrane V0 proton pore complex (components: a, c, c', c'', d, e, f and VOA1).

The protein resides in the vacuole membrane. Its function is as follows. Subunit of the V0 complex of vacuolar(H+)-ATPase (V-ATPase), a multisubunit enzyme composed of a peripheral complex (V1) that hydrolyzes ATP and a membrane integral complex (V0) that translocates protons. V-ATPase is responsible for acidifying and maintaining the pH of intracellular compartments. This subunit is a non-integral membrane component of the membrane pore domain and is required for proper assembly of the V0 sector. Might be involved in the regulated assembly of V1 subunits onto the membrane sector or alternatively may prevent the passage of protons through V0 pores. The chain is V-type proton ATPase subunit d from Neurospora crassa (strain ATCC 24698 / 74-OR23-1A / CBS 708.71 / DSM 1257 / FGSC 987).